We begin with the raw amino-acid sequence, 123 residues long: Fluoride-specific ion channel FluC 1 (123 aa).

The next 4 helical transmembrane spans lie at 1-21 (MVDLLLIGLGGSIGAILRYTL), 34-54 (PLATFLINIIGSFGLGLLYGF), 59-79 (VIWLLLGTGFFGGFTTFSTYI), and 99-119 (LTSIFTGVVFFAAGMWLANFF). Na(+) is bound by residues Gly70 and Thr73.

This sequence belongs to the fluoride channel Fluc/FEX (TC 1.A.43) family.

It localises to the cell membrane. It carries out the reaction fluoride(in) = fluoride(out). Its activity is regulated as follows. Na(+) is not transported, but it plays an essential structural role and its presence is essential for fluoride channel function. Its function is as follows. Fluoride-specific ion channel. Important for reducing fluoride concentration in the cell, thus reducing its toxicity. The polypeptide is Fluoride-specific ion channel FluC 1 (Carboxydothermus hydrogenoformans (strain ATCC BAA-161 / DSM 6008 / Z-2901)).